The primary structure comprises 701 residues: Elongation factor G (701 aa).

The tr-type G domain maps to lysine 6–leucine 286. GTP is bound by residues alanine 15–threonine 22, aspartate 83–histidine 87, and asparagine 137–aspartate 140.

Belongs to the TRAFAC class translation factor GTPase superfamily. Classic translation factor GTPase family. EF-G/EF-2 subfamily.

It localises to the cytoplasm. Catalyzes the GTP-dependent ribosomal translocation step during translation elongation. During this step, the ribosome changes from the pre-translocational (PRE) to the post-translocational (POST) state as the newly formed A-site-bound peptidyl-tRNA and P-site-bound deacylated tRNA move to the P and E sites, respectively. Catalyzes the coordinated movement of the two tRNA molecules, the mRNA and conformational changes in the ribosome. This is Elongation factor G from Cytophaga hutchinsonii (strain ATCC 33406 / DSM 1761 / CIP 103989 / NBRC 15051 / NCIMB 9469 / D465).